Consider the following 83-residue polypeptide: METILGFTAIAVALLIGMGALGTAIGFGLLGGKFLEGAARQPEMAPMLQVKMFIVAGLLDAVTMIGVGIALYMLFTNPLGAML.

Helical transmembrane passes span 10–30 (IAVA…FGLL) and 52–72 (MFIV…IALY).

The protein belongs to the ATPase C chain family. F-type ATPases have 2 components, F(1) - the catalytic core - and F(0) - the membrane proton channel. F(1) has five subunits: alpha(3), beta(3), gamma(1), delta(1), epsilon(1). F(0) has three main subunits: a(1), b(2) and c(10-14). The alpha and beta chains form an alternating ring which encloses part of the gamma chain. F(1) is attached to F(0) by a central stalk formed by the gamma and epsilon chains, while a peripheral stalk is formed by the delta and b chains.

It is found in the cell inner membrane. In terms of biological role, f(1)F(0) ATP synthase produces ATP from ADP in the presence of a proton or sodium gradient. F-type ATPases consist of two structural domains, F(1) containing the extramembraneous catalytic core and F(0) containing the membrane proton channel, linked together by a central stalk and a peripheral stalk. During catalysis, ATP synthesis in the catalytic domain of F(1) is coupled via a rotary mechanism of the central stalk subunits to proton translocation. Its function is as follows. Key component of the F(0) channel; it plays a direct role in translocation across the membrane. A homomeric c-ring of between 10-14 subunits forms the central stalk rotor element with the F(1) delta and epsilon subunits. This is ATP synthase subunit c from Shewanella amazonensis (strain ATCC BAA-1098 / SB2B).